The primary structure comprises 1390 residues: Nuclear pore complex protein Nup155 (1390 aa).

Residue S525 is glycosylated (O-linked (GlcNAc) serine). The interval G598–S632 is disordered. K739 is covalently cross-linked (Glycyl lysine isopeptide (Lys-Gly) (interchain with G-Cter in SUMO2)). The interval Q984–S1011 is disordered. The residue at position 1056 (S1056) is a Phosphoserine.

It belongs to the non-repetitive/WGA-negative nucleoporin family. As to quaternary structure, interacts with GLE1. Able to form a heterotrimer with GLE1 and NUP42 in vitro. Forms a complex with NUP35, NUP93, NUP205 and lamin B. Phosphorylated. Phosphorylation and dephosphorylation may be important for the function of NUP155 and may play a role in the reversible disassembly of the nuclear pore complex during mitosis. In terms of processing, disulfide-linked to NUP62. The inner channel of the NPC has a different redox environment from the cytoplasm and allows the formation of interchain disulfide bonds between some nucleoporins, the significant increase of these linkages upon oxidative stress reduces the permeability of the NPC.

It is found in the nucleus. It localises to the nuclear pore complex. The protein resides in the nucleus membrane. Its function is as follows. Essential component of nuclear pore complex. Could be essessential for embryogenesis. Nucleoporins may be involved both in binding and translocating proteins during nucleocytoplasmic transport. This Rattus norvegicus (Rat) protein is Nuclear pore complex protein Nup155 (Nup155).